A 549-amino-acid chain; its full sequence is Cytoplasmic trehalase (549 aa).

Residues R168, 175-176 (WD), N212, 221-223 (RSQ), 292-294 (RDE), and G324 contribute to the substrate site. Catalysis depends on proton donor/acceptor residues D326 and E509. E525 is a binding site for substrate.

It belongs to the glycosyl hydrolase 37 family. In terms of assembly, monomer.

The protein localises to the cytoplasm. It catalyses the reaction alpha,alpha-trehalose + H2O = alpha-D-glucose + beta-D-glucose. Its pathway is glycan degradation; trehalose degradation; D-glucose from alpha,alpha-trehalose: step 1/1. Its function is as follows. Hydrolyzes trehalose to glucose. Could be involved, in cells returning to low osmolarity conditions, in the utilization of the accumulated cytoplasmic trehalose, which was synthesized in response to high osmolarity. This chain is Cytoplasmic trehalase, found in Salmonella typhi.